The chain runs to 1005 residues: DNA polymerase (1005 aa).

Belongs to the DNA polymerase type-B family. Interacts with OPG148. Component of the Uracil-DNA glycosylase(UDG)-OPG148-polymerase complex; OPG148 and OPG116/UDG form a heterodimeric processivity factor that associates with OPG071 to form the processive polymerase holoenzyme.

The enzyme catalyses DNA(n) + a 2'-deoxyribonucleoside 5'-triphosphate = DNA(n+1) + diphosphate. In terms of biological role, catalyzes DNA synthesis. Acquires processivity by associating with a heterodimeric processivity factor comprised of the viral OPG148 and OPG116 proteins, thereby forming the DNA polymerase holoenzyme. Displays 3'- to 5' exonuclease activity. Might participate in viral DNA recombination. Does not perform OPG116/D4synthesis across an abasic site. The polypeptide is DNA polymerase (OPG071) (Variola virus (isolate Human/India/Ind3/1967) (VARV)).